Here is a 1150-residue protein sequence, read N- to C-terminus: MNRNNPNEYEIIDAPYCGCPSDDDVRYPLASDPNAAFQNMNYKEYLQTYDGDYTGSLINPNLSINPRDVLQTGINIVGRILGFLGVPFAGQLVTFYTFLLNQLWPTNDNAVWEAFMAQIEELIDQKISAQVVRNALDDLTGLHDYYEEYLAALEEWLERPNGARANLVTQRFENLHTAFVTRMPSFGTGPGSQRDAVALLTVYAQAANLHLLLLKDAEIYGARWGLQQGQINLYFNAQQERTRIYTNHCVETYNRGLEDVRGTNTESWLNYHRFRREMTLMAMDLVALFPFYNVRQYPNGANPQLTREIYTDPIVYNPPANQGICRRWGNNPYNTFSELENAFIRPPHLFERLNRLTISRNRYTAPTTNSFLDYWSGHTLQSQHANNPTTYETSYGQITSNTRLFNTTNGARAIDSRARNFGNLYANLYGVSSLNIFPTGVMSEITNAANTCRQDLTTTEELPLENNNFNLLSHVTFLRFNTTQGGPLATLGFVPTYVWTREDVDFTNTITADRITQLPWVKASEIGGGTTVVKGPGFTGGDILRRTDGGAVGTIRANVNAPLTQQYRIRLRYASTTSFVVNLFVNNSAAGFTLPSTMAQNGSLTYESFNTLEVTHTIRFSQSDTTLRLNIFPSISGQEVYVDKLEIVPINPTREAEEDLEDAKKAVASLFTRTRDGLQVNVTDYQVDQAANLVSCLSDEQYGHDKKMLLEAVRAAKRLSRERNLLQDPDFNEINSTEENGWKASNGVTISEGGPFFKGRALQLASARENYPTYIYQKVDASTLKPYTRYKLDGFVQSSQDLEIDLIHHHKVHLVKNVPDNLVSDTYSDGSCSGINRCEEQHQVDVQLDAEDHPKDCCEAAQTHEFSSYIHTGDLNASVDQGIWVVLQVRTTDGYATLGNLELVEVGPLSGESLEREQRDNAKWNEEVGRKRAETDRIYQDAKQAINHLFVDYQDQQLSPEVGMADIIDAQNLIASISDVYSDAVLQIPGINYEMYTELSNRLQQASYLYTSRNVVQNGDFNSGLDSWNATTDTAVQQDGNMHFLVLSHWDAQVSQQFRVQPNCKYVLRVTAKKVGNGDGYVTIQDGAHHRETLTFNACDYDVNGTHVNDNSYITKELVFYPKTEHMWVEVSETEGTFYIDSIEFIETQE.

Belongs to the delta endotoxin family.

Promotes colloidosmotic lysis by binding to the midgut epithelial cells of insects. In Bacillus thuringiensis subsp. aizawai, this protein is Pesticidal crystal protein Cry9Ea (cry9Ea).